The chain runs to 78 residues: Conotoxin 5 (78 aa).

A signal peptide spans 1–22 (MKLTCMMIVTVLFLTAWIFITA). Positions 23 to 49 (DNSRNGIENLPRMRRHEMKNPKASKLN) are excised as a propeptide. Cystine bridges form between Cys-53–Cys-69, Cys-60–Cys-73, and Cys-68–Cys-77.

This sequence belongs to the conotoxin O1 superfamily. Expressed by the venom duct.

The protein resides in the secreted. The polypeptide is Conotoxin 5 (Conus imperialis (Imperial cone)).